A 98-amino-acid chain; its full sequence is RNA-binding protein Hfq (98 aa).

The region spanning 11–71 is the Sm domain; it reads DVFLNHVRRS…ISTVMPATPV (61 aa).

The protein belongs to the Hfq family. As to quaternary structure, homohexamer.

Functionally, RNA chaperone that binds small regulatory RNA (sRNAs) and mRNAs to facilitate mRNA translational regulation in response to envelope stress, environmental stress and changes in metabolite concentrations. Also binds with high specificity to tRNAs. This Gluconacetobacter diazotrophicus (strain ATCC 49037 / DSM 5601 / CCUG 37298 / CIP 103539 / LMG 7603 / PAl5) protein is RNA-binding protein Hfq.